The sequence spans 122 residues: Large ribosomal subunit protein uL14 (122 aa).

The protein belongs to the universal ribosomal protein uL14 family. Part of the 50S ribosomal subunit. Forms a cluster with proteins L3 and L19. In the 70S ribosome, L14 and L19 interact and together make contacts with the 16S rRNA in bridges B5 and B8.

Its function is as follows. Binds to 23S rRNA. Forms part of two intersubunit bridges in the 70S ribosome. In Xylella fastidiosa (strain M23), this protein is Large ribosomal subunit protein uL14.